The sequence spans 358 residues: Protein-glutamate methylesterase/protein-glutamine glutaminase 1 (358 aa).

The 118-residue stretch at 7–124 (SVLLVDDSAV…KNFLIDSAAE (118 aa)) folds into the Response regulatory domain. D58 bears the 4-aspartylphosphate mark. A CheB-type methylesterase domain is found at 170–358 (AQTTERIVAI…QEIHQAILHR (189 aa)). Residues S182, H208, and D304 contribute to the active site.

Belongs to the CheB family. Post-translationally, phosphorylated by CheA. Phosphorylation of the N-terminal regulatory domain activates the methylesterase activity.

It is found in the cytoplasm. The catalysed reaction is [protein]-L-glutamate 5-O-methyl ester + H2O = L-glutamyl-[protein] + methanol + H(+). The enzyme catalyses L-glutaminyl-[protein] + H2O = L-glutamyl-[protein] + NH4(+). Involved in chemotaxis. Part of a chemotaxis signal transduction system that modulates chemotaxis in response to various stimuli. Catalyzes the demethylation of specific methylglutamate residues introduced into the chemoreceptors (methyl-accepting chemotaxis proteins or MCP) by CheR. Also mediates the irreversible deamidation of specific glutamine residues to glutamic acid. In Pseudomonas savastanoi pv. phaseolicola (strain 1448A / Race 6) (Pseudomonas syringae pv. phaseolicola (strain 1448A / Race 6)), this protein is Protein-glutamate methylesterase/protein-glutamine glutaminase 1.